An 88-amino-acid chain; its full sequence is DNA-directed RNA polymerase subunit omega (88 aa).

Belongs to the RNA polymerase subunit omega family. The RNAP catalytic core consists of 2 alpha, 1 beta, 1 beta' and 1 omega subunit. When a sigma factor is associated with the core the holoenzyme is formed, which can initiate transcription.

The catalysed reaction is RNA(n) + a ribonucleoside 5'-triphosphate = RNA(n+1) + diphosphate. Its function is as follows. Promotes RNA polymerase assembly. Latches the N- and C-terminal regions of the beta' subunit thereby facilitating its interaction with the beta and alpha subunits. The sequence is that of DNA-directed RNA polymerase subunit omega from Salinispora arenicola (strain CNS-205).